We begin with the raw amino-acid sequence, 594 residues long: Cytosolic Fe-S cluster assembly factor NAR1 (594 aa).

Positions 20, 88, 91, 94, 209, and 264 each coordinate [4Fe-4S] cluster. A disordered region spans residues 444 to 465 (RRARMSKSEDSSGASASSMAPA). Low complexity predominate over residues 454 to 465 (SSGASASSMAPA). Residues cysteine 481 and cysteine 485 each coordinate [4Fe-4S] cluster. The interval 492-511 (IAAPAPTSTPPAAPAPAHAA) is disordered.

This sequence belongs to the NARF family.

In terms of biological role, component of the cytosolic Fe/S protein assembly machinery. Required for maturation of extramitochondrial Fe/S proteins. May play a role in the transfer of pre-assembled Fe/S clusters to target apoproteins. This Lodderomyces elongisporus (strain ATCC 11503 / CBS 2605 / JCM 1781 / NBRC 1676 / NRRL YB-4239) (Yeast) protein is Cytosolic Fe-S cluster assembly factor NAR1 (NAR1).